We begin with the raw amino-acid sequence, 568 residues long: Acyl-CoA ligase gloD (568 aa).

Residues 211-219 (TSGTSGFLK), 352-357 (PGYGLT), D436, R455, and K553 contribute to the ATP site. Positions 282 to 352 (DMQIALKSVQ…QLCPEWEINP (71 aa)) are SBD1. The tract at residues 353 to 415 (GYGLTESFVC…VRSPSVMKEY (63 aa)) is SBD2.

It belongs to the ATP-dependent AMP-binding enzyme family.

The protein operates within mycotoxin biosynthesis. Functionally, acyl-CoA ligase; part of the gene cluster that mediates the biosynthesis of pneumocandins, lipohexapeptides of the echinocandin family that prevent fungal cell wall formation by non-competitive inhibition of beta-1,3-glucan synthase. The 10,12-dimethylmyristoyl side chain is synthesized by the reducing polyketide synthase gloL/GLPKS4. The thioesterase gloN/GLHYD exclusively interacts with gloL/GLPKS4 to maintain turnover of the polyketide side chain. The 10R,12S-dimethylmyristic acid is then transferred to the first thiolation domain of the nonribosomal peptide synthetase gloA/GLNRPS4 by the acyl-AMP ligase gloD/GLligase, followed by its acylation to L-ornithine to trigger elongation of the cyclic hexapeptide. L-ornithine, 4R-hydroxyl-L-proline (generated from L-proline by the dioxygenase gloF/GLOXY2), 3S-hydroxyl-L-homotyrosine (generated by gloG/GLHtyB, gloH/GLHtyA, gloI/GLHtyC, gloJ/GLHtyD and hydroxylated at C-3 by the dioxygenase gloM/GLOXY1), 3R-hydroxyl-L-glutamine (generated from L-glutamine probably by the dioxygenase gloE/GLOXY3) and 3S-hydroxyl-L-proline (generated from L-proline by the dioxygenase gloF/GLOXY2 to yield pneumocandin B0), or 3S-hydroxyl-4S-methyl-L-proline (generated from L-leucine by the dioxygenase gloC/GLOXY4 to yield pneumocandin A0) are sequentially added to the growing chain. The last C domain of gloA/GLNRPS4 is proposed to be responsible for cyclization by condensation to form the peptide bond between L-ornithine and 3S-hydroxyl-4S-methyl-L-proline (for pneumocandin A0) or 3S-hydroxyl-L-proline (for pneumocandin B0). Finally, the subsequent C-4 hydroxylation of 3S-hydroxyl-L-homotyrosine and L-ornithine dihydroxylation at C-4 and C-5 are performed by the cytochrome P450 monooxygenases gloP/GLP450-1 and gloO/GLP450-2, respectively. This is Acyl-CoA ligase gloD from Glarea lozoyensis (strain ATCC 20868 / MF5171).